The primary structure comprises 1334 residues: Putative transmembrane protein ORF1334 (1334 aa).

Residues 53–73 traverse the membrane as a helical segment; that stretch reads VSIVVLVLTLFIIPVIIPPAH. The interval 1107–1135 is disordered; that stretch reads LSASTTPPSSTTPTPPSSSSSSSSSSSIS. Positions 1110-1135 are enriched in low complexity; that stretch reads STTPPSSTTPTPPSSSSSSSSSSSIS. Helical transmembrane passes span 1256-1276, 1292-1312, and 1313-1333; these read AVLP…SFFI, IIYI…TSVV, and YGTV…SRSQ.

It is found in the host membrane. In Acidianus two-tailed virus (ATV), this protein is Putative transmembrane protein ORF1334.